We begin with the raw amino-acid sequence, 1032 residues long: Exo-beta-D-glucosaminidase (1032 aa).

The first 32 residues, Met-1–Ala-32, serve as a signal peptide directing secretion. The propeptide occupies Ala-33–Ala-46. The active-site Proton donor is Asp-469. The active-site Nucleophile is Glu-541. A disordered region spans residues Ser-883–Pro-908. Residues Val-909–Leu-1032 enclose the CBM6 domain.

This sequence belongs to the glycosyl hydrolase 2 family. As to quaternary structure, monomer.

Its subcellular location is the secreted. It catalyses the reaction Hydrolysis of chitosan or chitosan oligosaccharides to remove successive D-glucosamine residues from the non-reducing termini.. Hydrolyzes chitosan and chitooligosaccharides with retention of anomeric configuration. Has maximum activity on chitotetraose, chitopentaose and their corresponding alcohols, with a slight decrease in the rate of hydrolysis on longer chains. Has no activity against beta-D-glucopyranoside, beta-D-xylopyranoside, beta-D-mannoside, beta-D-glucuronide, beta-D-galactoside, beta-D-N-acetylgalactosamide, beta-D-N-acetylglucosaminide and alpha-D-N-acetylglucosaminide. The sequence is that of Exo-beta-D-glucosaminidase from Amycolatopsis orientalis (Nocardia orientalis).